A 1442-amino-acid chain; its full sequence is Cleavage and polyadenylation specificity factor subunit 1 (1442 aa).

This sequence belongs to the CPSF1 family. As to quaternary structure, component of the CPSF complex, at least composed of CPSF160, CPSF100, CPSF73-I, CPSF73-II, CPSF30, FY and FIPS5. Forms a complex with cleavage and polyadenylation specificity factor (CPSF) subunits FY, CPSF30, CPSF73-I, CPSF 73-II and CPSF100.

It is found in the nucleus. Its function is as follows. CPSF plays a key role in pre-mRNA 3'-end formation, recognizing the AAUAAA signal sequence and interacting with poly(A)polymerase and other factors to bring about cleavage and poly(A) addition. This subunit is involved in the RNA recognition step of the polyadenylation reaction. In Arabidopsis thaliana (Mouse-ear cress), this protein is Cleavage and polyadenylation specificity factor subunit 1 (CPSF160).